A 70-amino-acid chain; its full sequence is Cold shock-like protein CspJ (70 aa).

Residues 7 to 67 (GLVKWFNPEK…GPKGPSAVNV (61 aa)) enclose the CSD domain.

It is found in the cytoplasm. This Salmonella typhi protein is Cold shock-like protein CspJ (cspJ).